The following is a 314-amino-acid chain: GTPase-interacting component 1 (314 aa).

Disordered regions lie at residues 112 to 156, 199 to 221, and 241 to 261; these read SRRH…KHDV, TMDSHHDGNETNNTPNGNKQLDS, and LGDSVSEKTNPSSPSVSSFSG. Residues 126–139 enclose the CRIB domain; it reads ISTPFDFHHISHAN. Positions 140-156 are enriched in basic and acidic residues; the sequence is GKREDNPLESHEEKHDV. A compositionally biased stretch (polar residues) spans 208 to 221; sequence ETNNTPNGNKQLDS. Over residues 251 to 260 the composition is skewed to low complexity; it reads PSSPSVSSFS.

This sequence belongs to the BORG/CEP family. Interacts with GTP-bound CDC42.

Its subcellular location is the bud neck. The protein resides in the bud tip. The protein localises to the cytoplasm. It localises to the cell cortex. It is found in the cytoskeleton. Required for cell size and shape control, bud site selection, bud emergence, actin cytoskeletal organization, mitotic spindle orientation/positioning, and mating projection formation in response to mating pheromone. The sequence is that of GTPase-interacting component 1 (GIC1) from Saccharomyces cerevisiae (strain ATCC 204508 / S288c) (Baker's yeast).